The chain runs to 506 residues: Aldehyde dehydrogenase [NAD(P)+] 1 (506 aa).

Catalysis depends on glutamate 268, which acts as the Proton acceptor. The Nucleophile role is filled by cysteine 302.

Belongs to the aldehyde dehydrogenase family.

The protein resides in the cytoplasm. The enzyme catalyses an aldehyde + NAD(+) + H2O = a carboxylate + NADH + 2 H(+). It carries out the reaction 3-aminopropanal + NAD(+) + H2O = beta-alanine + NADH + 2 H(+). Its function is as follows. Cytoplasmic aldehyde dehydrogenase involved in ethanol oxidation. Required for pantothenic acid production through the conversion of 3-aminopropanal to beta-alanine, an intermediate in pantothenic acid (vitamin B5) and coenzyme A (CoA) biosynthesis. This chain is Aldehyde dehydrogenase [NAD(P)+] 1 (ALD2), found in Saccharomyces cerevisiae (strain ATCC 204508 / S288c) (Baker's yeast).